The sequence spans 919 residues: Rho guanine nucleotide exchange factor 1 (919 aa).

The RGSL domain occupies 39 to 230; it reads DQNSQFQSLE…SLYMRHLGVR (192 aa). The disordered stretch occupies residues 247–402; the sequence is VMGNRRSDEP…PPGWRELVPS (156 aa). Basic and acidic residues predominate over residues 281–310; sequence DCRHLKVEVDEKPGPADRKGSLGISSRDRT. The segment covering 363–379 has biased composition (acidic residues); the sequence is STEDNGETESPEPGDDG. The residue at position 372 (serine 372) is a Phosphoserine. The DH domain maps to 414 to 603; sequence KRQEVISELL…REILHHVNQA (190 aa). The region spanning 645 to 758 is the PH domain; that stretch reads KLVHEGPLTW…WCALITETAG (114 aa). Threonine 693 is subject to Phosphothreonine. Tyrosine 736 is subject to Phosphotyrosine; by JAK2. 2 disordered regions span residues 761-800 and 839-865; these read KVPA…PADA and TEED…PTHT. The span at 775–787 shows a compositional bias: low complexity; that stretch reads PSSTREPLLSSSE. Residues 864–893 are a coiled coil; it reads HTQEVEENLLSLEVVIKQLEELEEEFCRLR. Serine 904 is modified (phosphoserine).

As to quaternary structure, interacts with RHOA, GNA12 and GNA13. Homooligomerizes through the coiled coil region. Interacts with CTNNAL1. May interact with CCPG1. Post-translationally, phosphorylated by PKCA. Angiotensin-2 induced Tyr-736 phosphorylation is mediated by JAK2.

It is found in the cytoplasm. Its subcellular location is the membrane. Its function is as follows. Seems to play a role in the regulation of RhoA GTPase by guanine nucleotide-binding alpha-12 (GNA12) and alpha-13 (GNA13) subunits. Acts as a GTPase-activating protein (GAP) for GNA12 and GNA13, and as guanine nucleotide exchange factor (GEF) for RhoA GTPase. Activated G alpha 13/GNA13 stimulates the RhoGEF activity through interaction with the RGS-like domain. This GEF activity is inhibited by binding to activated GNA12. Mediates angiotensin-2-induced RhoA activation. In lymphoid follicles, may trigger activation of GNA13 as part of S1PR2-dependent signaling pathway that leads to inhibition of germinal center (GC) B cell growth and migration outside the GC niche. The sequence is that of Rho guanine nucleotide exchange factor 1 (Arhgef1) from Rattus norvegicus (Rat).